Consider the following 361-residue polypeptide: sn-glycerol-3-phosphate import ATP-binding protein UgpC (361 aa).

In terms of domain architecture, ABC transporter spans 4–235 (LSLKGIRKSY…PETVFVAGFI (232 aa)). Position 37-44 (37-44 (GPSGCGKS)) interacts with ATP.

It belongs to the ABC transporter superfamily. sn-glycerol-3-phosphate importer (TC 3.A.1.1.3) family. The complex is composed of two ATP-binding proteins (UgpC), two transmembrane proteins (UgpA and UgpE) and a solute-binding protein (UgpB).

The protein resides in the cell inner membrane. The enzyme catalyses sn-glycerol 3-phosphate(out) + ATP + H2O = sn-glycerol 3-phosphate(in) + ADP + phosphate + H(+). Its function is as follows. Part of the ABC transporter complex UgpBAEC involved in sn-glycerol-3-phosphate (G3P) import. Responsible for energy coupling to the transport system. This chain is sn-glycerol-3-phosphate import ATP-binding protein UgpC, found in Burkholderia ambifaria (strain ATCC BAA-244 / DSM 16087 / CCUG 44356 / LMG 19182 / AMMD) (Burkholderia cepacia (strain AMMD)).